A 308-amino-acid polypeptide reads, in one-letter code: Vomeronasal type-1 receptor 92 (308 aa).

Topologically, residues 1–18 (MNKDNTLHTIMKITMFSE) are extracellular. Residues 19–39 (VSVGISANSILFFAHLCMLLG) traverse the membrane as a helical segment. Over 40 to 48 (ENRPKPFHL) the chain is Cytoplasmic. The helical transmembrane segment at 49-69 (YIVSLSLTQLILLITMGLIAV) threads the bilayer. The Extracellular segment spans residues 70–91 (DMFMSWGRWDSTPCQSLIYLHR). An intrachain disulfide couples Cys-83 to Cys-170. A helical membrane pass occupies residues 92-112 (LLRGFTLCAACLLNVFWMITL). The Cytoplasmic portion of the chain corresponds to 113–132 (SPRSSCLSKFKHNSPHHISG). The chain crosses the membrane as a helical span at residues 133-153 (AFLFLCVLYMSFSSHLLVSII). Residues 154 to 188 (ATPNLTSNIFMYVTQSCSLLPMSYSRTSTFSTTIA) are Extracellular-facing. Asn-157 carries an N-linked (GlcNAc...) asparagine glycan. The helical transmembrane segment at 189–209 (IREAFLISLMALSSGFMVTLL) threads the bilayer. Residues 210-236 (WRHKKQAQHLHSTSLSSKASPERRATR) are Cytoplasmic-facing. A helical membrane pass occupies residues 237–257 (TILLLMSFFVVLYILENVVFY). Over 258–267 (SRMKFKDGSM) the chain is Extracellular. A helical transmembrane segment spans residues 268–288 (FYCVQIIVSHSYATISPFVFI). At 289-308 (CTEKHMTKILRSVCTRIINI) the chain is on the cytoplasmic side.

It belongs to the G-protein coupled receptor 1 family.

The protein resides in the cell membrane. Its function is as follows. Putative pheromone receptor implicated in the regulation of social as well as reproductive behavior. This chain is Vomeronasal type-1 receptor 92 (Vom1r92), found in Rattus norvegicus (Rat).